The sequence spans 604 residues: Glutamine--fructose-6-phosphate aminotransferase [isomerizing] (604 aa).

The active-site Nucleophile; for GATase activity is Cys-2. One can recognise a Glutamine amidotransferase type-2 domain in the interval 2 to 216; that stretch reads CGIVGYVGFR…DGDVVRLTRE (215 aa). SIS domains are found at residues 281-420 and 453-594; these read LALD…GRGA and VAEK…VDQP. Catalysis depends on Lys-599, which acts as the For Fru-6P isomerization activity.

Homodimer.

Its subcellular location is the cytoplasm. It catalyses the reaction D-fructose 6-phosphate + L-glutamine = D-glucosamine 6-phosphate + L-glutamate. Functionally, catalyzes the first step in hexosamine metabolism, converting fructose-6P into glucosamine-6P using glutamine as a nitrogen source. The protein is Glutamine--fructose-6-phosphate aminotransferase [isomerizing] of Thermus thermophilus (strain ATCC 27634 / DSM 579 / HB8).